Here is an 822-residue protein sequence, read N- to C-terminus: Coiled-coil domain-containing protein 175 (822 aa).

Coiled-coil stretches lie at residues 129-164, 223-397, and 510-537; these read IIEISQIKRKIETMNNEVKFLTNKISELKSMNEVLG, IEKQ…KQMM, and HLIETLKEQLAQDKKDYVKKEERLIEEL.

In Mus musculus (Mouse), this protein is Coiled-coil domain-containing protein 175 (Ccdc175).